The sequence spans 366 residues: Peptide chain release factor 2 (366 aa).

Position 253 is an N5-methylglutamine (glutamine 253).

This sequence belongs to the prokaryotic/mitochondrial release factor family. Methylated by PrmC. Methylation increases the termination efficiency of RF2.

Its subcellular location is the cytoplasm. In terms of biological role, peptide chain release factor 2 directs the termination of translation in response to the peptide chain termination codons UGA and UAA. This chain is Peptide chain release factor 2 (prfB), found in Buchnera aphidicola subsp. Baizongia pistaciae (strain Bp).